Here is a 204-residue protein sequence, read N- to C-terminus: NAD(P)H dehydrogenase (quinone) (204 aa).

A Flavodoxin-like domain is found at 4–195 (IQIVFYSMYG…AIARFQGAHV (192 aa)). FMN-binding positions include 10–15 (SMYGHI) and 83–85 (TRF). Residue Tyr12 coordinates NAD(+). Substrate is bound at residue Trp103. Residues 118–124 (STATQHG) and His139 contribute to the FMN site.

Belongs to the WrbA family. FMN is required as a cofactor.

It carries out the reaction a quinone + NADH + H(+) = a quinol + NAD(+). The catalysed reaction is a quinone + NADPH + H(+) = a quinol + NADP(+). The protein is NAD(P)H dehydrogenase (quinone) of Trichlorobacter lovleyi (strain ATCC BAA-1151 / DSM 17278 / SZ) (Geobacter lovleyi).